The chain runs to 545 residues: Propane 2-monooxygenase, hydroxylase component large subunit (545 aa).

Residues Glu97, Glu127, His130, Glu192, Glu226, and His229 each coordinate Fe cation.

The protein belongs to the TmoA/XamoA family. In terms of assembly, the propane 2-monooxygenase multicomponent enzyme system is composed of an electron transfer component and a monooxygenase component interacting with the effector protein PrmD. The electron transfer component is composed of a reductase (PrmB), and the monooxygenase component is formed by a large subunit (PrmA) and a small subunit (PrmC). Probably requires the presence of the chaperonin-like protein PrmG to ensure a productive folding, resulting of a soluble PrmA, which leads to the active form of PrmABCD. Requires Fe(2+) as cofactor.

The catalysed reaction is propane + NADH + O2 + H(+) = propan-2-ol + NAD(+) + H2O. The enzyme catalyses phenol + NADH + O2 + H(+) = hydroquinone + NAD(+) + H2O. Functionally, component of the propane 2-monooxygenase multicomponent enzyme system which is involved in the degradation of propane via the O2-dependent hydroxylation of propane. Under acetone induction, also able to catalyze the oxidation of phenol to yield hydroquinone. This chain is Propane 2-monooxygenase, hydroxylase component large subunit, found in Gordonia sp. (strain TY-5).